The following is an 82-amino-acid chain: MGSFSIWHWLIVLLIVVMVFGTKKLKNIGSDLGGAVKGFKDGMKDGASTDDSATTSAPAGQVTNNSAAADKTTIDVEAKHKS.

The helical transmembrane segment at 1–21 threads the bilayer; it reads MGSFSIWHWLIVLLIVVMVFG. A disordered region spans residues 46 to 82; sequence GASTDDSATTSAPAGQVTNNSAAADKTTIDVEAKHKS. The span at 49 to 67 shows a compositional bias: polar residues; that stretch reads TDDSATTSAPAGQVTNNSA. The span at 72 to 82 shows a compositional bias: basic and acidic residues; the sequence is TTIDVEAKHKS.

Belongs to the TatA/E family. In terms of assembly, the Tat system comprises two distinct complexes: a TatABC complex, containing multiple copies of TatA, TatB and TatC subunits, and a separate TatA complex, containing only TatA subunits. Substrates initially bind to the TatABC complex, which probably triggers association of the separate TatA complex to form the active translocon.

It localises to the cell inner membrane. Its function is as follows. Part of the twin-arginine translocation (Tat) system that transports large folded proteins containing a characteristic twin-arginine motif in their signal peptide across membranes. TatA could form the protein-conducting channel of the Tat system. In Acidovorax ebreus (strain TPSY) (Diaphorobacter sp. (strain TPSY)), this protein is Sec-independent protein translocase protein TatA.